Here is a 473-residue protein sequence, read N- to C-terminus: Microtubule-binding protein TANGLED (473 aa).

The required for binding to TAN and location to the cortical division sites (CDS) during cytokinesis stretch occupies residues 1–132 (MVARTPQKQR…VTRDIVDAIA (132 aa)). 2 disordered regions span residues 131–218 (IAPK…ENSF) and 290–354 (ASKF…LSTA). 2 stretches are compositionally biased toward polar residues: residues 205-216 (ISPQVKGNNGEN) and 307-329 (PTRNGSNSVRKSPRGSRSPTRTV).

Interacts with POK1. As to expression, strongly expressed in flower buds and root tips.

Its subcellular location is the nucleus. It localises to the nucleolus. It is found in the cytoplasm. The protein localises to the cytoskeleton. The protein resides in the phragmoplast. Its function is as follows. Is required for spatial control cell division during plant development. Through an association with microtubules, acts both for the positioning of cytoskeletal arrays that establish planes of cell division during prophase and for spatial guidance of expanding phragmoplasts toward preestablished cortical division sites (CDS) during cytokinesis. In Arabidopsis thaliana (Mouse-ear cress), this protein is Microtubule-binding protein TANGLED (TAN).